A 156-amino-acid chain; its full sequence is Arginine repressor (156 aa).

The protein belongs to the ArgR family.

Its subcellular location is the cytoplasm. Its pathway is amino-acid biosynthesis; L-arginine biosynthesis [regulation]. Its function is as follows. Regulates arginine biosynthesis genes. This is Arginine repressor from Cronobacter sakazakii (strain ATCC BAA-894) (Enterobacter sakazakii).